The chain runs to 284 residues: Undecaprenyl-diphosphatase (284 aa).

8 helical membrane passes run Ile7–Leu27, Glu44–His64, Leu90–Asp110, Phe116–Ile136, Val167–Ile187, Phe197–Phe217, Phe229–Phe249, and Phe259–Phe279.

This sequence belongs to the UppP family.

Its subcellular location is the cell membrane. It carries out the reaction di-trans,octa-cis-undecaprenyl diphosphate + H2O = di-trans,octa-cis-undecaprenyl phosphate + phosphate + H(+). Catalyzes the dephosphorylation of undecaprenyl diphosphate (UPP). Confers resistance to bacitracin. The polypeptide is Undecaprenyl-diphosphatase (Lactococcus lactis subsp. cremoris (strain SK11)).